A 317-amino-acid polypeptide reads, in one-letter code: tRNA dimethylallyltransferase (317 aa).

14 to 21 (GPTAVGKT) lines the ATP pocket. 16–21 (TAVGKT) contacts substrate. The interaction with substrate tRNA stretch occupies residues 39 to 42 (DSMQ).

It belongs to the IPP transferase family. Monomer. Mg(2+) serves as cofactor.

The catalysed reaction is adenosine(37) in tRNA + dimethylallyl diphosphate = N(6)-dimethylallyladenosine(37) in tRNA + diphosphate. Its function is as follows. Catalyzes the transfer of a dimethylallyl group onto the adenine at position 37 in tRNAs that read codons beginning with uridine, leading to the formation of N6-(dimethylallyl)adenosine (i(6)A). This is tRNA dimethylallyltransferase from Bacillus cereus (strain B4264).